A 396-amino-acid chain; its full sequence is MNNEPVKRGKKNRWELNLPIMTYVVADDWIDKLGRETFTLWLRFHTWVDREDELRDYDRIPRSFENIYKKTLGISKSKFYRLIKPLWEYGLIDIIEYEESNRNSTKPKNIIVYEYPLHEIERKYKPLEKLRDWDKDYNSVSKELGKTGGRPRKKDSEEEPEKKPEEVTKKKRKYKLKRVIHNGFKNETVEGFKNETVEGFKNETVTVSKIKPNNYSNIFNNLSNISTNVSNNLLIDDDEEIENEPTGRTINRSLLFSQEDIKQAYQFINRFSVIQLRENFSFDKHFEERLVCYLWKAGISTFYTHEISKMIKKIADYEKSKKGRLNPIRDRALYMVNGLVMNRASSQSEHATYKLNQYKKQKEQEKQQQEQQRSRVPFYNWLEEREEQTEGQLPTT.

2 disordered regions span residues 141–170 and 356–396; these read SKEL…VTKK and NQYK…LPTT. Residues 154-168 show a composition bias toward basic and acidic residues; sequence KDSEEEPEKKPEEVT.

This Bacillus subtilis protein is Protein RepA (repA).